The following is a 111-amino-acid chain: Tubulin beta chain (111 aa).

Residues 82-111 (SEYQQYQDATAEDEGEFDEEEAEGEGQEYA) are disordered. Over residues 91-111 (TAEDEGEFDEEEAEGEGQEYA) the composition is skewed to acidic residues.

It belongs to the tubulin family. Dimer of alpha and beta chains. A typical microtubule is a hollow water-filled tube with an outer diameter of 25 nm and an inner diameter of 15 nM. Alpha-beta heterodimers associate head-to-tail to form protofilaments running lengthwise along the microtubule wall with the beta-tubulin subunit facing the microtubule plus end conferring a structural polarity. Microtubules usually have 13 protofilaments but different protofilament numbers can be found in some organisms and specialized cells. Mg(2+) serves as cofactor.

Its subcellular location is the cytoplasm. It is found in the cytoskeleton. Functionally, tubulin is the major constituent of microtubules, a cylinder consisting of laterally associated linear protofilaments composed of alpha- and beta-tubulin heterodimers. Microtubules grow by the addition of GTP-tubulin dimers to the microtubule end, where a stabilizing cap forms. Below the cap, tubulin dimers are in GDP-bound state, owing to GTPase activity of alpha-tubulin. The protein is Tubulin beta chain of Lymnaea stagnalis (Great pond snail).